The sequence spans 266 residues: Undecaprenyl-diphosphatase (266 aa).

The next 8 membrane-spanning stretches (helical) occupy residues 4-24, 39-59, 86-106, 112-132, 145-165, 182-202, 210-230, and 246-266; these read ILSA…PISS, LSII…IIYY, LKLI…GTFI, MFTL…ILML, ILLA…PGIS, KSAF…AILL, IFMV…FVVG, and LYYF…FVRI.

Belongs to the UppP family.

It is found in the cell inner membrane. The catalysed reaction is di-trans,octa-cis-undecaprenyl diphosphate + H2O = di-trans,octa-cis-undecaprenyl phosphate + phosphate + H(+). In terms of biological role, catalyzes the dephosphorylation of undecaprenyl diphosphate (UPP). Confers resistance to bacitracin. The protein is Undecaprenyl-diphosphatase of Borreliella burgdorferi (strain ATCC 35210 / DSM 4680 / CIP 102532 / B31) (Borrelia burgdorferi).